Consider the following 617-residue polypeptide: Tetratricopeptide repeat protein 39B (617 aa).

2 TPR repeats span residues 328 to 361 and 561 to 594; these read SLIL…QEEW and PFTL…YKDY.

The protein belongs to the TTC39 family.

Regulates high density lipoprotein (HDL) cholesterol metabolism by promoting the ubiquitination and degradation of the oxysterols receptors LXR (NR1H2 and NR1H3). The chain is Tetratricopeptide repeat protein 39B (Ttc39b) from Rattus norvegicus (Rat).